The primary structure comprises 240 residues: Octanoyltransferase (240 aa).

Positions 31–216 (GQVGDTLLLL…HLCAVFDLEP (186 aa)) constitute a BPL/LPL catalytic domain. Substrate is bound by residues 76 to 83 (RGGGATYH), 145 to 147 (AIG), and 159 to 161 (GLA). C177 functions as the Acyl-thioester intermediate in the catalytic mechanism.

This sequence belongs to the LipB family.

It is found in the cytoplasm. It catalyses the reaction octanoyl-[ACP] + L-lysyl-[protein] = N(6)-octanoyl-L-lysyl-[protein] + holo-[ACP] + H(+). It functions in the pathway protein modification; protein lipoylation via endogenous pathway; protein N(6)-(lipoyl)lysine from octanoyl-[acyl-carrier-protein]: step 1/2. Catalyzes the transfer of endogenously produced octanoic acid from octanoyl-acyl-carrier-protein onto the lipoyl domains of lipoate-dependent enzymes. Lipoyl-ACP can also act as a substrate although octanoyl-ACP is likely to be the physiological substrate. The chain is Octanoyltransferase from Roseiflexus sp. (strain RS-1).